Consider the following 119-residue polypeptide: Anamorsin homolog (119 aa).

The segment covering 1–15 (MSSSATSTQAFSLKT) has biased composition (polar residues). Disordered stretches follow at residues 1 to 21 (MSSSATSTQAFSLKTRQPIPD) and 33 to 119 (LKQA…TDDV). Residues cysteine 42, cysteine 49, cysteine 52, and cysteine 54 each coordinate [2Fe-2S] cluster. Residues 42–54 (CTTRRRACKNCVC) are fe-S binding site A. Positions 81, 84, 92, and 95 each coordinate [4Fe-4S] cluster. 2 consecutive short sequence motifs (cx2C motif) follow at residues 81–84 (CGNC) and 92–95 (CANC). Positions 81 to 95 (CGNCSKGDAFRCANC) are fe-S binding site B.

It belongs to the anamorsin family. As to quaternary structure, monomer. [2Fe-2S] cluster is required as a cofactor. The cofactor is [4Fe-4S] cluster.

It is found in the cytoplasm. The protein resides in the mitochondrion intermembrane space. Component of the cytosolic iron-sulfur (Fe-S) protein assembly (CIA) machinery. Required for the maturation of extramitochondrial Fe-S proteins. Part of an electron transfer chain functioning in an early step of cytosolic Fe-S biogenesis, facilitating the de novo assembly of a [4Fe-4S] cluster on the cytosolic Fe-S scaffold complex. Electrons are transferred from NADPH via a FAD- and FMN-containing diflavin oxidoreductase. Together with the diflavin oxidoreductase, also required for the assembly of the diferric tyrosyl radical cofactor of ribonucleotide reductase (RNR), probably by providing electrons for reduction during radical cofactor maturation in the catalytic small subunit. The sequence is that of Anamorsin homolog from Leishmania infantum.